A 242-amino-acid polypeptide reads, in one-letter code: Protein LST7 (242 aa).

In terms of domain architecture, uDENN FLCN/SMCR8-type spans 48 to 212; it reads SCLLQFPEES…NKSKFGRNLV (165 aa).

Required for the nitrogen-regulated transport of amino acid permeases GAP1 and PUT4 from the Golgi to the cell surface. In Saccharomyces cerevisiae (strain ATCC 204508 / S288c) (Baker's yeast), this protein is Protein LST7 (LST7).